The following is a 495-amino-acid chain: Cytochrome P450 monooxygenase BOA4 (495 aa).

A helical membrane pass occupies residues 12-31; it reads LANSNTVIAGCIVFALYYLF. An N-linked (GlcNAc...) asparagine glycan is attached at N115. C439 serves as a coordination point for heme.

This sequence belongs to the cytochrome P450 family. Heme serves as cofactor.

It is found in the membrane. The protein operates within polyketide biosynthesis. In terms of biological role, cytochrome P450 monooxygenase; part of the gene cluster A that mediates the biosynthesis of botcinic acid and its botcinin derivatives, acetate-derived polyketides that contribute to virulence when combined with the sesquiterpene botrydial. Botcinic acid and its derivatives have been shown to induce chlorosis and necrosis during host plant infection, but also have antifungal activities. Two polyketide synthases, BOA6 and BOA9, are involved in the biosynthesis of botcinins. BOA6 mediates the formation of the per-methylated tetraketide core by condensation of four units of malonyl-CoA with one unit of acetyl-CoA, which would be methylated in activated methylene groups to yield a bicyclic acid intermediate that could then either be converted to botrylactone derivatives or lose the starter acetate unit through a retro-Claisen type C-C bond cleavage to yield botcinin derivatives. The second polyketide synthase, BOA9, is probably required for the biosynthesis of the tetraketide side chain of botcinins. The methyltransferase (MT) domain within BOA6 is probably responsible for the incorporation of four methyl groups. The trans-enoyl reductase BOA5 might take over the enoyl reductase function of BOA6 that misses an ER domain. The monooxygenases BOA2, BOA3 and BOA4 might be involved in further hydroxylations at C4, C5 and C8, whereas BOA7, close to BOA9, could potentially be involved in the hydroxylation at C4 in the side chain of botcinins. The polypeptide is Cytochrome P450 monooxygenase BOA4 (Botryotinia fuckeliana (strain B05.10) (Noble rot fungus)).